The sequence spans 66 residues: Beta-toxin Cbo1 (66 aa).

The 66-residue stretch at 1–66 (KEGYLVNHST…VWPLPKKTCN (66 aa)) folds into the LCN-type CS-alpha/beta domain. Disulfide bonds link cysteine 12/cysteine 65, cysteine 16/cysteine 41, cysteine 25/cysteine 46, and cysteine 29/cysteine 48. The residue at position 66 (asparagine 66) is an Asparagine amide.

The protein belongs to the long (4 C-C) scorpion toxin superfamily. Sodium channel inhibitor family. Beta subfamily. Expressed by the venom gland.

Its subcellular location is the secreted. Functionally, beta toxins bind voltage-independently at site-4 of sodium channels and shift the voltage of activation toward more negative potentials thereby affecting sodium channel activation and promoting spontaneous and repetitive firing. Is active on the human voltage-gated sodium channel Nav1.6/SCN8A when tested at 200 nM. In vivo, is toxic to mice when intraperitoneally injected. The sequence is that of Beta-toxin Cbo1 from Centruroides bonito (Scorpion).